Here is a 2656-residue protein sequence, read N- to C-terminus: 1-phosphatidylinositol 3-phosphate 5-kinase (2656 aa).

A disordered region spans residues 24–159 (FGTDDSQKDF…NSTNNDTSSN (136 aa)). Low complexity-rich tracts occupy residues 59 to 107 (NNNN…NNNN) and 124 to 159 (SNTT…TSSN). Residues 198–255 (DHSSAVCYECSEEFTTFKRRHHCRLCGQIFCWKCSQKTLTDGKGERVRVCNFCYRRYM) form an FYVE-type zinc finger. Cys-204, Cys-207, Cys-220, Cys-223, Cys-228, Cys-231, Cys-247, and Cys-250 together coordinate Zn(2+). Residues 304-331 (NVSLGNSGDNSSFVQSPNNNFSQSPTFS) show a composition bias toward polar residues. 12 disordered regions span residues 304–383 (NVSL…NNQQ), 465–495 (DHHQ…SPIV), 517–570 (DNLD…SSSS), 618–657 (NNND…NTSF), 670–823 (TIGR…QQQP), 1115–1150 (SNSI…NNST), 1633–1659 (RSKR…QILI), 1710–1844 (VNNN…SSTP), 2031–2127 (QQQQ…SISP), 2179–2208 (NQQQ…SIIE), 2246–2304 (QQGD…SSNS), and 2617–2656 (NNNN…QINK). The span at 332-355 (QQQQQQQQQQQQQQQQQQQQQQQQ) shows a compositional bias: low complexity. 3 stretches are compositionally biased toward polar residues: residues 356–371 (TTGV…NSTL), 473–489 (SNSH…TPSG), and 542–557 (SHSS…TVST). Low complexity-rich tracts occupy residues 558-570 (GESN…SSSS), 618-637 (NNND…NNNN), 674-730 (NNNN…NLPN), 743-757 (QQQQ…QPQP), and 811-823 (PSSS…QQQP). 2 stretches are compositionally biased toward low complexity: residues 1639–1656 (QQQQ…PQPQ) and 1710–1746 (VNNN…NNNN). Coiled coils occupy residues 1741–1823 (NNNN…NNNN) and 2019–2061 (KRIS…QQEQ). The segment covering 1750–1798 (NKSENENENKNENKNENENENENKNENKNENENENKKENENQLEIKNEN) has biased composition (basic and acidic residues). Composition is skewed to low complexity over residues 1807–1833 (NNNN…IDNN), 2031–2061 (QQQQ…QQEQ), 2078–2107 (SPSS…SETN), and 2118–2127 (LSGSPISISP). A compositionally biased stretch (basic and acidic residues) spans 2193 to 2202 (IDEKDDRNTE). 2 stretches are compositionally biased toward low complexity: residues 2252–2283 (NNNN…NNNN) and 2618–2647 (NNNN…GNIN). One can recognise a PIPK domain in the interval 2275–2596 (NNNNTNNNNE…RFRDAMWLYF (322 aa)).

It is found in the endosome membrane. The protein resides in the early endosome membrane. Its subcellular location is the cytoplasmic vesicle. The protein localises to the phagosome membrane. It localises to the late endosome membrane. It carries out the reaction a 1,2-diacyl-sn-glycero-3-phospho-(1D-myo-inositol-3-phosphate) + ATP = a 1,2-diacyl-sn-glycero-3-phospho-(1D-myo-inositol-3,5-bisphosphate) + ADP + H(+). It catalyses the reaction a 1,2-diacyl-sn-glycero-3-phospho-(1D-myo-inositol) + ATP = a 1,2-diacyl-sn-glycero-3-phospho-(1D-myo-inositol-5-phosphate) + ADP + H(+). The enzyme catalyses L-seryl-[protein] + ATP = O-phospho-L-seryl-[protein] + ADP + H(+). Functionally, dual specificity kinase part of the PI(3,5)P2 regulatory complex which regulates both the synthesis and turnover of phosphatidylinositol 3,5-bisphosphate (PtdIns(3,5)P2). Catalyzes the phosphorylation of phosphatidylinositol 3-phosphate on the fifth hydroxyl of the myo-inositol ring, to form phosphatidylinositol 3,5-bisphosphate. This Dictyostelium discoideum (Social amoeba) protein is 1-phosphatidylinositol 3-phosphate 5-kinase (pip5k3).